We begin with the raw amino-acid sequence, 210 residues long: HTH-type transcriptional repressor FabR (210 aa).

In terms of domain architecture, HTH tetR-type spans 10 to 70 (KTRRSLVEAA…TMVDESGLML (61 aa)). The H-T-H motif DNA-binding region spans 33-52 (SLREVAREAGIAPTSFYRHF).

As to quaternary structure, homodimer.

Its subcellular location is the cytoplasm. In terms of biological role, represses the transcription of fabB, involved in unsaturated fatty acid (UFA) biosynthesis. By controlling UFA production, FabR directly influences the physical properties of the membrane bilayer. This is HTH-type transcriptional repressor FabR from Klebsiella pneumoniae subsp. pneumoniae (strain ATCC 700721 / MGH 78578).